An 800-amino-acid chain; its full sequence is Putative antiporter subunit mnhA2 (800 aa).

Helical transmembrane passes span 3-23 (LVYLLGGLIVIMLIVLMTLFI), 29-49 (FAGYIALLAPILASGYFLAQI), 78-98 (GLGLMFGLIISIIGVAVFFYA), 109-129 (LPRFFLYLLLFMFSMLGIVVS), 133-153 (ILMYVFWELTSVSSFLLISYW), 167-187 (FIITVLGGLALLTGFIMLYII), 202-222 (SISEHALFIPMMIMLLIGAFT), 249-269 (SATMVKAGIFLLFKFTPILGL), 273-293 (YIYIVTFVGLITMIFGSVTAL), 300-320 (GILAYSTISQLGMIMSMVGLG), 337-357 (LILFAGLFHLMNHAIFKCALF), 387-407 (LVMTLAALSMAGVPLLNGFLS), 428-448 (LTIIVVAIGVIASIFTFVYAV), 472-492 (PWLFSLPAIILMVMIPIIFFI), 527-547 (GVNLPLIFSVIVIIVGLILAL), 596-616 (IITVLIFSILIAYGIFQVGLP), 627-647 (GPLEVILGIMISVVGIALVFI), 651-671 (LTMVILNGIIGYSVALFFLLM), 676-696 (LALTQLVVETITTILFIVSFS), 712-732 (TIKIIVSFIMAGAVVTLIFIA), and 768-788 (LDTMFEGIVLIIAGLGIYTLL).

This sequence belongs to the CPA3 antiporters (TC 2.A.63) subunit A family. May form a heterooligomeric complex that consists of seven subunits: mnhA2, mnhB2, mnhC2, mnhD2, mnhE2, mnhF2 and mnhG2.

The protein localises to the cell membrane. This is Putative antiporter subunit mnhA2 (mnhA2) from Staphylococcus haemolyticus (strain JCSC1435).